The sequence spans 258 residues: Chymotrypsin-2 (258 aa).

A signal peptide spans 1 to 17 (MLRKVFAVVSVLLVVSA). A propeptide spans 18–32 (AKVTKLVLDDHYVNR) (activation peptide). Residues 33-255 (VVGGEVAKNG…YHEWVRTTMA (223 aa)) form the Peptidase S1 domain. Cys59 and Cys75 are oxidised to a cystine. Residues His74 and Asp119 each act as charge relay system in the active site. 2 cysteine pairs are disulfide-bonded: Cys182-Cys198 and Cys208-Cys232. Ser212 acts as the Charge relay system in catalysis.

The protein belongs to the peptidase S1 family. After blood feeding, expression is induced in the midgut epithelium, followed by secretion into the midgut lumen.

It is found in the secreted. The enzyme catalyses Preferential cleavage: Tyr-|-Xaa, Trp-|-Xaa, Phe-|-Xaa, Leu-|-Xaa.. This is Chymotrypsin-2 (CHYM2) from Anopheles gambiae (African malaria mosquito).